Reading from the N-terminus, the 279-residue chain is MKTKADFFRMKQADEPIVMVTAYDFPSAKLVEQAGVDMILVGDSLGMVVLGYDSTIPVTVDDMIHHTKAVRRGAPNTFIVTDMPFMSYHASKEEALQNARRIMQQSGANAVKVEGADEVVETIAALTKAGVPVVAHLGLTPQSVGVLGGYKVQGKDAESAKKLLNDAKQCEQAGAIALVLECVPKQLGAAVARELTIPVIGIGAGAEVDGQVLVYHDLLGYGVNRVPKFVKQYAAIQETIVEALANYIADVKLRQFPEPAHTFTMKEEEWVALYGGKQS.

Mg(2+)-binding residues include Asp-43 and Asp-82. Residues 43-44 (DS), Asp-82, and Lys-112 each bind 3-methyl-2-oxobutanoate. Glu-114 serves as a coordination point for Mg(2+). Glu-181 (proton acceptor) is an active-site residue.

This sequence belongs to the PanB family. In terms of assembly, homodecamer; pentamer of dimers. It depends on Mg(2+) as a cofactor.

It localises to the cytoplasm. The enzyme catalyses 3-methyl-2-oxobutanoate + (6R)-5,10-methylene-5,6,7,8-tetrahydrofolate + H2O = 2-dehydropantoate + (6S)-5,6,7,8-tetrahydrofolate. It functions in the pathway cofactor biosynthesis; (R)-pantothenate biosynthesis; (R)-pantoate from 3-methyl-2-oxobutanoate: step 1/2. Its function is as follows. Catalyzes the reversible reaction in which hydroxymethyl group from 5,10-methylenetetrahydrofolate is transferred onto alpha-ketoisovalerate to form ketopantoate. The sequence is that of 3-methyl-2-oxobutanoate hydroxymethyltransferase from Geobacillus thermodenitrificans (strain NG80-2).